Here is a 256-residue protein sequence, read N- to C-terminus: Ribosomal RNA small subunit methyltransferase J (256 aa).

Residues 104-105, 120-121, 156-157, and aspartate 174 contribute to the S-adenosyl-L-methionine site; these read RD, ER, and SS.

Belongs to the methyltransferase superfamily. RsmJ family.

It is found in the cytoplasm. The enzyme catalyses guanosine(1516) in 16S rRNA + S-adenosyl-L-methionine = N(2)-methylguanosine(1516) in 16S rRNA + S-adenosyl-L-homocysteine + H(+). In terms of biological role, specifically methylates the guanosine in position 1516 of 16S rRNA. This Yersinia pseudotuberculosis serotype O:1b (strain IP 31758) protein is Ribosomal RNA small subunit methyltransferase J.